The chain runs to 133 residues: Small ribosomal subunit protein bS16 (133 aa).

Residues 99-133 (EKWQQNQTERRQKRLAVKTRRRQAKKAAEAKGAEA) are disordered. Positions 109 to 123 (RQKRLAVKTRRRQAK) are enriched in basic residues. The span at 124 to 133 (KAAEAKGAEA) shows a compositional bias: basic and acidic residues.

It belongs to the bacterial ribosomal protein bS16 family.

The protein is Small ribosomal subunit protein bS16 of Chlorobium limicola (strain DSM 245 / NBRC 103803 / 6330).